A 2035-amino-acid polypeptide reads, in one-letter code: Proline-rich protein 12 (2035 aa).

4 disordered regions span residues G210–L280, R292–Y311, C329–G584, and Q645–Y685. Residues Q223–H240 are compositionally biased toward pro residues. Residues A249 to S261 show a composition bias toward low complexity. A compositionally biased stretch (pro residues) spans A296–A305. A phosphoserine mark is found at S330 and S338. Residues S338–E364 are compositionally biased toward low complexity. Gly residues predominate over residues T365 to Y377. Composition is skewed to low complexity over residues S408–A429 and S437–G455. Residues P476–G487 show a composition bias toward pro residues. 2 stretches are compositionally biased toward polar residues: residues T490–G501 and G520–H534. Positions G540–E555 are enriched in gly residues. Phosphoserine is present on S648. Gly residues predominate over residues G670–P681. T735 carries the phosphothreonine modification. Disordered stretches follow at residues A755–L844, H851–P870, G879–F920, and E946–K1061. The span at P830–P841 shows a compositional bias: pro residues. Phosphoserine is present on S859. Pro residues predominate over residues S1031 to S1046. Residues S1070 and S1128 each carry the phosphoserine modification. 4 disordered regions span residues R1112–S1244, P1288–K1355, T1367–I1567, and H1662–L1839. Positions K1190 to G1199 are enriched in basic residues. The segment covering R1200–K1214 has biased composition (basic and acidic residues). K1214 bears the N6-acetyllysine mark. T1295 is modified (phosphothreonine). At S1299 the chain carries Phosphoserine. Residues Q1314 to S1329 are compositionally biased toward pro residues. S1372, S1373, and S1378 each carry phosphoserine. Positions P1449–P1529 are enriched in pro residues. A compositionally biased stretch (basic and acidic residues) spans P1535 to E1547. The residue at position 1555 (T1555) is a Phosphothreonine. The residue at position 1562 (S1562) is a Phosphoserine. The segment covering E1698–P1709 has biased composition (basic and acidic residues). T1699 is subject to Phosphothreonine. Positions E1710–R1730 are enriched in pro residues. The segment covering P1731 to R1768 has biased composition (basic and acidic residues). The segment covering S1769–R1779 has biased composition (polar residues). Low complexity predominate over residues S1817 to P1828. Phosphoserine is present on S1924.

As to expression, expressed in brain.

The protein resides in the nucleus. The protein localises to the postsynaptic density. Its subcellular location is the synapse. It localises to the synaptosome. The sequence is that of Proline-rich protein 12 from Mus musculus (Mouse).